Reading from the N-terminus, the 254-residue chain is 3-oxo-5-alpha-steroid 4-dehydrogenase 2 (254 aa).

Transmembrane regions (helical) follow at residues Ser-8–Ala-28, Pro-72–Phe-92, Phe-146–Ile-166, and Leu-206–Leu-226.

Belongs to the steroid 5-alpha reductase family.

It is found in the microsome membrane. The protein resides in the endoplasmic reticulum membrane. The catalysed reaction is a 3-oxo-5alpha-steroid + NADP(+) = a 3-oxo-Delta(4)-steroid + NADPH + H(+). The enzyme catalyses 17beta-hydroxy-5alpha-androstan-3-one + NADP(+) = testosterone + NADPH + H(+). It carries out the reaction 5alpha-pregnane-3,20-dione + NADP(+) = progesterone + NADPH + H(+). Its function is as follows. Converts testosterone (T) into 5-alpha-dihydrotestosterone (DHT) and progesterone or corticosterone into their corresponding 5-alpha-3-oxosteroids. It plays a central role in sexual differentiation and androgen physiology. This is 3-oxo-5-alpha-steroid 4-dehydrogenase 2 (SRD5A2) from Macaca fascicularis (Crab-eating macaque).